Reading from the N-terminus, the 698-residue chain is Probable microcin-H47 secretion/processing ATP-binding protein MchF (698 aa).

The Peptidase C39 domain maps to Gln-26–Val-145. Residue Cys-32 is part of the active site. 5 helical membrane-spanning segments follow: residues Gly-33–Leu-53, Leu-90–Val-110, Thr-289–Tyr-311, Leu-315–Tyr-337, and Leu-397–Leu-417. In terms of domain architecture, ABC transmembrane type-1 spans Leu-176–Ile-458. Residues Leu-492–Ile-698 enclose the ABC transporter domain. Gly-526 to Thr-533 provides a ligand contact to ATP.

The protein belongs to the ABC transporter superfamily.

It is found in the cell membrane. In terms of biological role, probably involved, in conjunction with MchE, in the secretion of microcin H47. The polypeptide is Probable microcin-H47 secretion/processing ATP-binding protein MchF (mchF) (Escherichia coli).